A 103-amino-acid chain; its full sequence is UPF0235 protein RL4503 (103 aa).

It belongs to the UPF0235 family.

This is UPF0235 protein RL4503 from Rhizobium johnstonii (strain DSM 114642 / LMG 32736 / 3841) (Rhizobium leguminosarum bv. viciae).